The primary structure comprises 575 residues: Cytokinin dehydrogenase 1 (575 aa).

An N-terminal signal peptide occupies residues 1–31; it reads MGLTSSLRFHRQNNKTFLGIFMILVLSCIPG. N-linked (GlcNAc...) asparagine glycans are attached at residues asparagine 14, asparagine 38, and asparagine 115. Positions 84–262 constitute an FAD-binding PCMH-type domain; that stretch reads YQLPPLAILH…TRARISLEPA (179 aa). The FAD site is built by alanine 120, glycine 122, and glycine 124. Histidine 125 is subject to Pros-8alpha-FAD histidine. Positions 126, 130, 186, 191, 197, 201, and 252 each coordinate FAD. N-linked (GlcNAc...) asparagine glycosylation is found at asparagine 303, asparagine 318, asparagine 437, and asparagine 467. Residues tyrosine 498 and glutamine 536 each coordinate FAD.

Belongs to the oxygen-dependent FAD-linked oxidoreductase family. FAD serves as cofactor. As to expression, expressed in shoot apexes, lateral shoot meristems, growing tissues of young flowers, and weakly at the root-hypocotyl junction.

It is found in the vacuole. The enzyme catalyses N(6)-dimethylallyladenine + A + H2O = 3-methyl-2-butenal + adenine + AH2. Its function is as follows. Catalyzes the oxidation of cytokinins, a family of N(6)-substituted adenine derivatives that are plant hormones, where the substituent is an isopentenyl group. Catalyzes in vitro the oxidation of various types of cytokinin nucleotides that are known as direct products of cytokinin biosynthesis. Promotes adventitious root initiation downstream of MYC2-dependent jasmonate signaling. Cytokinin degraded by CKX1 is required for cell division in the female gametophyte by modulating the expression of cell cycle genes. The polypeptide is Cytokinin dehydrogenase 1 (CKX1) (Arabidopsis thaliana (Mouse-ear cress)).